The sequence spans 346 residues: NADPH dehydrogenase (346 aa).

FMN is bound at residue 23 to 26; it reads SPMC. Substrate is bound at residue Y28. FMN is bound by residues A60 and Q102. A substrate-binding site is contributed by 164–167; that stretch reads HGAH. Residues R215 and 307–308 contribute to the FMN site; that span reads GR.

The protein belongs to the NADH:flavin oxidoreductase/NADH oxidase family. NamA subfamily. As to quaternary structure, homotetramer. The cofactor is FMN.

The catalysed reaction is A + NADPH + H(+) = AH2 + NADP(+). In terms of biological role, catalyzes the reduction of the double bond of an array of alpha,beta-unsaturated aldehydes and ketones. It also reduces the nitro group of nitroester and nitroaromatic compounds. It could have a role in detoxification processes. The sequence is that of NADPH dehydrogenase from Bacillus cytotoxicus (strain DSM 22905 / CIP 110041 / 391-98 / NVH 391-98).